The following is a 421-amino-acid chain: 2',3'-cyclic-nucleotide 3'-phosphodiesterase (421 aa).

2 positions are modified to phosphoserine: S6 and S9. Phosphotyrosine is present on Y110. S170 is modified (phosphoserine). Catalysis depends on H251, which acts as the Proton acceptor. T253 provides a ligand contact to substrate. The Proton donor role is filled by H330. A substrate-binding site is contributed by T332. S359 bears the Phosphoserine mark. C418 is subject to Cysteine methyl ester. C418 is lipidated: S-farnesyl cysteine. The propeptide at 419 to 421 (TII) is removed in mature form.

Belongs to the 2H phosphoesterase superfamily. CNPase family. In terms of assembly, exists as monomers and homodimers.

It localises to the membrane. It is found in the melanosome. The catalysed reaction is a nucleoside 2',3'-cyclic phosphate + H2O = a nucleoside 2'-phosphate + H(+). Functionally, catalyzes the formation of 2'-nucleotide products from 2',3'-cyclic substrates. May participate in RNA metabolism in the myelinating cell, CNP is the third most abundant protein in central nervous system myelin. The chain is 2',3'-cyclic-nucleotide 3'-phosphodiesterase from Pongo abelii (Sumatran orangutan).